Reading from the N-terminus, the 140-residue chain is Hemoglobin subunit alpha-D (140 aa).

Residues 1-140 enclose the Globin domain; sequence MLTDSDKKLV…VCTVLAEKYR (140 aa). The heme b site is built by histidine 57 and histidine 86.

Belongs to the globin family. As to quaternary structure, heterotetramer of two alpha-D chains and two beta chains. In terms of tissue distribution, red blood cells.

Functionally, involved in oxygen transport from the lung to the various peripheral tissues. The chain is Hemoglobin subunit alpha-D (HBAD) from Columba livia (Rock dove).